The sequence spans 180 residues: MLKPSDKWSWYFSDSEGYLMLNLGDDMLFRTNLSRNLLVDCAFIENPFTVDDASDFQLYKEHIACLPLSEPRKAELALYCVAAKRFHKPVQPKSWFFDVQGTGYTPQQGQLISLRNSLNSGIFIALEVGENATLCAYSDLVSFALNGSKTLEFGQVIKVMHDRMSDVNTLLYTPQMAMVS.

This sequence belongs to the ZapC family. As to quaternary structure, interacts directly with FtsZ.

It localises to the cytoplasm. Functionally, contributes to the efficiency of the cell division process by stabilizing the polymeric form of the cell division protein FtsZ. Acts by promoting interactions between FtsZ protofilaments and suppressing the GTPase activity of FtsZ. The polypeptide is Cell division protein ZapC (Vibrio cholerae serotype O1 (strain ATCC 39315 / El Tor Inaba N16961)).